A 557-amino-acid chain; its full sequence is Formate--tetrahydrofolate ligase (557 aa).

Position 66 to 73 (66 to 73) interacts with ATP; that stretch reads TPAGEGKS.

The protein belongs to the formate--tetrahydrofolate ligase family.

The catalysed reaction is (6S)-5,6,7,8-tetrahydrofolate + formate + ATP = (6R)-10-formyltetrahydrofolate + ADP + phosphate. It participates in one-carbon metabolism; tetrahydrofolate interconversion. The chain is Formate--tetrahydrofolate ligase from Clostridium botulinum (strain Loch Maree / Type A3).